A 154-amino-acid polypeptide reads, in one-letter code: uncharacterized protein (154 aa).

One can recognise a HotDog ACOT-type domain in the interval 13–128; the sequence is SKGVLLLRTL…VFTFVAVDNN (116 aa).

It belongs to the acyl coenzyme A hydrolase family.

This is an uncharacterized protein from Haemophilus influenzae (strain ATCC 51907 / DSM 11121 / KW20 / Rd).